The following is a 377-amino-acid chain: Nitric oxide reductase FlRd-NAD(+) reductase (377 aa).

It belongs to the FAD-dependent oxidoreductase family. Requires FAD as cofactor.

Its subcellular location is the cytoplasm. It carries out the reaction 2 reduced [nitric oxide reductase rubredoxin domain] + NAD(+) + H(+) = 2 oxidized [nitric oxide reductase rubredoxin domain] + NADH. Its pathway is nitrogen metabolism; nitric oxide reduction. Functionally, one of at least two accessory proteins for anaerobic nitric oxide (NO) reductase. Reduces the rubredoxin moiety of NO reductase. The chain is Nitric oxide reductase FlRd-NAD(+) reductase from Escherichia coli O6:H1 (strain CFT073 / ATCC 700928 / UPEC).